Consider the following 180-residue polypeptide: UPF0227 protein Ent638_1623 (180 aa).

Belongs to the UPF0227 family.

This is UPF0227 protein Ent638_1623 from Enterobacter sp. (strain 638).